Here is a 517-residue protein sequence, read N- to C-terminus: Putative succinate-semialdehyde dehydrogenase [NADP(+)] (517 aa).

Residues 157-158, 181-184, and 232-233 each bind NADP(+); these read WN, KPDS, and GS. Glu-254 serves as the catalytic Proton acceptor. Leu-255 contributes to the NADP(+) binding site. Cys-288 acts as the Nucleophile in catalysis. Residue Glu-386 participates in NADP(+) binding.

It belongs to the aldehyde dehydrogenase family.

The catalysed reaction is succinate semialdehyde + NADP(+) + H2O = succinate + NADPH + 2 H(+). Its function is as follows. Catalyzes the NADP(+)-dependent oxidation of succinate semialdehyde to succinate. Although it has succinate semialdehyde dehydrogenase activity, is likely to act physiologically on a different aldehyde(s). The polypeptide is Putative succinate-semialdehyde dehydrogenase [NADP(+)] (gabD2) (Mycolicibacterium smegmatis (strain ATCC 700084 / mc(2)155) (Mycobacterium smegmatis)).